A 146-amino-acid chain; its full sequence is Large ribosomal subunit protein uL15 (146 aa).

The interval 1–59 (MRLEELKAPAGANKRTKRVGRGTGSGHGKTSTRGHKGQKSRSGGGVRPGFEGGQMPLQR) is disordered. Positions 30–39 (TSTRGHKGQK) are enriched in basic residues. Residues 42 to 52 (SGGGVRPGFEG) show a composition bias toward gly residues.

It belongs to the universal ribosomal protein uL15 family. As to quaternary structure, part of the 50S ribosomal subunit.

Binds to the 23S rRNA. The protein is Large ribosomal subunit protein uL15 of Syntrophomonas wolfei subsp. wolfei (strain DSM 2245B / Goettingen).